A 182-amino-acid chain; its full sequence is MADSETPYHPDPEDLRRIPVDLFASKKLPGLSSGDLGFADSSEHLVFILRKSSSSLKSLLDSSGVPLFSISRLHNGVWELHKGDVEKRKDLVLTVKRTSKRFSKTESEVSFAGESSENLVIKGVPFQKSCTIYSQDSIVAQTSLMYKLRQIYVGRSKFRLTIFPGSIDHSLVVAMVAIFLQG.

It belongs to the LOR family.

In terms of biological role, might be related to the phospholipid scramblase and tubby-like superfamily of membrane tethered transcription factors. The sequence is that of Protein LURP-one-related 7 from Arabidopsis thaliana (Mouse-ear cress).